The following is a 294-amino-acid chain: Bifunctional protein FolD (294 aa).

NADP(+)-binding positions include 166 to 168 (GRS), Ser195, and Ile236.

The protein belongs to the tetrahydrofolate dehydrogenase/cyclohydrolase family. Homodimer.

The catalysed reaction is (6R)-5,10-methylene-5,6,7,8-tetrahydrofolate + NADP(+) = (6R)-5,10-methenyltetrahydrofolate + NADPH. It catalyses the reaction (6R)-5,10-methenyltetrahydrofolate + H2O = (6R)-10-formyltetrahydrofolate + H(+). It functions in the pathway one-carbon metabolism; tetrahydrofolate interconversion. Its function is as follows. Catalyzes the oxidation of 5,10-methylenetetrahydrofolate to 5,10-methenyltetrahydrofolate and then the hydrolysis of 5,10-methenyltetrahydrofolate to 10-formyltetrahydrofolate. This chain is Bifunctional protein FolD, found in Chloroherpeton thalassium (strain ATCC 35110 / GB-78).